The sequence spans 352 residues: Photosystem II D2 protein 2 (352 aa).

A helical membrane pass occupies residues Cys40–Thr60. His117 contributes to the chlorophyll a binding site. Residues Gly124–Pro140 form a helical membrane-spanning segment. Residues Gln129 and Asn142 each coordinate pheophytin a. A helical transmembrane segment spans residues Val152–Ser165. His197 lines the chlorophyll a pocket. Residues Gly207 to Glu227 traverse the membrane as a helical segment. A plastoquinone is bound by residues His214 and Phe261. His214 serves as a coordination point for Fe cation. His268 provides a ligand contact to Fe cation. The helical transmembrane segment at Gly278–Arg294 threads the bilayer.

The protein belongs to the reaction center PufL/M/PsbA/D family. PSII is composed of 1 copy each of membrane proteins PsbA, PsbB, PsbC, PsbD, PsbE, PsbF, PsbH, PsbI, PsbJ, PsbK, PsbL, PsbM, PsbT, PsbX, PsbY, PsbZ, Psb30/Ycf12, peripheral proteins PsbO, CyanoQ (PsbQ), PsbU, PsbV and a large number of cofactors. It forms dimeric complexes. It depends on The D1/D2 heterodimer binds P680, chlorophylls that are the primary electron donor of PSII, and subsequent electron acceptors. It shares a non-heme iron and each subunit binds pheophytin, quinone, additional chlorophylls, carotenoids and lipids. There is also a Cl(-1) ion associated with D1 and D2, which is required for oxygen evolution. The PSII complex binds additional chlorophylls, carotenoids and specific lipids. as a cofactor.

The protein resides in the cellular thylakoid membrane. It catalyses the reaction 2 a plastoquinone + 4 hnu + 2 H2O = 2 a plastoquinol + O2. Its function is as follows. Photosystem II (PSII) is a light-driven water:plastoquinone oxidoreductase that uses light energy to abstract electrons from H(2)O, generating O(2) and a proton gradient subsequently used for ATP formation. It consists of a core antenna complex that captures photons, and an electron transfer chain that converts photonic excitation into a charge separation. The D1/D2 (PsbA/PsbD) reaction center heterodimer binds P680, the primary electron donor of PSII as well as several subsequent electron acceptors. D2 is needed for assembly of a stable PSII complex. The protein is Photosystem II D2 protein 2 of Synechococcus sp. (strain ATCC 27144 / PCC 6301 / SAUG 1402/1) (Anacystis nidulans).